The chain runs to 133 residues: Ribosome-binding factor A (133 aa).

The protein belongs to the RbfA family. Monomer. Binds 30S ribosomal subunits, but not 50S ribosomal subunits or 70S ribosomes.

It is found in the cytoplasm. Functionally, one of several proteins that assist in the late maturation steps of the functional core of the 30S ribosomal subunit. Associates with free 30S ribosomal subunits (but not with 30S subunits that are part of 70S ribosomes or polysomes). Required for efficient processing of 16S rRNA. May interact with the 5'-terminal helix region of 16S rRNA. The polypeptide is Ribosome-binding factor A (Acinetobacter baumannii (strain ACICU)).